The sequence spans 170 residues: Photosystem I assembly protein Ycf3 (170 aa).

TPR repeat units follow at residues 35–68 (AFTY…EIDP), 72–105 (SYIL…NPFL), and 120–153 (GEQA…TPGN).

This sequence belongs to the Ycf3 family.

It is found in the plastid. Its subcellular location is the chloroplast thylakoid membrane. In terms of biological role, essential for the assembly of the photosystem I (PSI) complex. May act as a chaperone-like factor to guide the assembly of the PSI subunits. The sequence is that of Photosystem I assembly protein Ycf3 from Zea mays (Maize).